Reading from the N-terminus, the 457-residue chain is Argininosuccinate lyase (457 aa).

This sequence belongs to the lyase 1 family. Argininosuccinate lyase subfamily.

The protein resides in the cytoplasm. It carries out the reaction 2-(N(omega)-L-arginino)succinate = fumarate + L-arginine. Its pathway is amino-acid biosynthesis; L-arginine biosynthesis; L-arginine from L-ornithine and carbamoyl phosphate: step 3/3. This chain is Argininosuccinate lyase, found in Serratia proteamaculans (strain 568).